We begin with the raw amino-acid sequence, 256 residues long: Reaction center protein M chain (256 aa).

Helical transmembrane passes span 52 to 78 (PGVA…LASV), 110 to 139 (EGGW…ARAL), and 142 to 167 (GTHM…PLLL). 2 residues coordinate (7R,8Z)-bacteriochlorophyll b: histidine 181 and histidine 201. Residues 197–225 (YNPFHMLSIAFLYGSAVLFAMHGATILAV) form a helical membrane-spanning segment. Residues histidine 218 and glutamate 233 each coordinate Fe cation. Residue tryptophan 251 coordinates a ubiquinone.

Belongs to the reaction center PufL/M/PsbA/D family. Reaction center is composed of four bacteriochlorophylls, two bacteriopheophytins, two ubiquinones, one iron, and two highly hydrophobic polypeptide chains (designated L and M).

It is found in the cellular chromatophore membrane. Its function is as follows. The reaction center is a membrane-bound complex that mediates the initial photochemical event in the electron transfer process of photosynthesis. The polypeptide is Reaction center protein M chain (pufM) (Pararhodospirillum photometricum (Rhodospirillum photometricum)).